We begin with the raw amino-acid sequence, 160 residues long: Ribosomal RNA large subunit methyltransferase H (160 aa).

S-adenosyl-L-methionine-binding positions include leucine 76, glycine 108, and 127–132 (LGELTW).

This sequence belongs to the RNA methyltransferase RlmH family. Homodimer.

Its subcellular location is the cytoplasm. It carries out the reaction pseudouridine(1915) in 23S rRNA + S-adenosyl-L-methionine = N(3)-methylpseudouridine(1915) in 23S rRNA + S-adenosyl-L-homocysteine + H(+). Its function is as follows. Specifically methylates the pseudouridine at position 1915 (m3Psi1915) in 23S rRNA. The chain is Ribosomal RNA large subunit methyltransferase H from Brucella anthropi (strain ATCC 49188 / DSM 6882 / CCUG 24695 / JCM 21032 / LMG 3331 / NBRC 15819 / NCTC 12168 / Alc 37) (Ochrobactrum anthropi).